Reading from the N-terminus, the 293-residue chain is 2-pyrone-4,6-dicarboxylate hydrolase (293 aa).

The disordered stretch occupies residues 1 to 20 (MTNDERILSWNETPSKPRYT). Substrate-binding positions include 29–31 (HCH), Y47, S75, R122, R128, Y154, and H178. The Proton acceptor role is filled by D246. N251 lines the substrate pocket.

It belongs to the metallo-dependent hydrolases superfamily. PDC hydrolase family. In terms of assembly, monomer.

The catalysed reaction is 2-oxo-2H-pyran-4,6-dicarboxylate + H2O = (1E)-4-oxobut-1-ene-1,2,4-tricarboxylate + H(+). The protein operates within secondary metabolite metabolism; lignin degradation. Its activity is regulated as follows. Strongly inhibited by 1 mM Zn(2+) ions. Also inhibited by pyridine-2,4-dicarboxylic acid, 5-hydroxyisophthalic acid and 5,5'-dithiobis(2-nitrobenzoic acid) (Ellman reagent). In terms of biological role, contributes to the degradation of lignin at the level of the protocatechuate 4,5-cleavage pathway. Catalyzes the hydrolysis of 2-pyrone-4,6-dicarboxylate (PDC) to (4E)-oxalomesaconate (OMA). The keto form of OMA can tautomerize into the enol form, 4-carboxy-2-hydroxymuconate (CHM), under certain pH conditions. Also catalyzes the reverse reaction. Is essential for the growth of Sphingobium sp. SYK-6 on vanillate but is not responsible for the growth of this strain on syringate. This chain is 2-pyrone-4,6-dicarboxylate hydrolase, found in Sphingobium sp. (strain NBRC 103272 / SYK-6).